Reading from the N-terminus, the 192-residue chain is UPF0312 protein Avin_03250 (192 aa).

The signal sequence occupies residues 1 to 23 (MLKKTLAALALGSALLGAGQAMA).

It belongs to the UPF0312 family. Type 1 subfamily.

It is found in the periplasm. This chain is UPF0312 protein Avin_03250, found in Azotobacter vinelandii (strain DJ / ATCC BAA-1303).